We begin with the raw amino-acid sequence, 287 residues long: Protease HtpX (287 aa).

A run of 2 helical transmembrane segments spans residues 4–24 (IFLL…VMSI) and 33–53 (GGLL…SLAI). His139 is a Zn(2+) binding site. Glu140 is an active-site residue. His143 serves as a coordination point for Zn(2+). The next 2 helical transmembrane spans lie at 154–174 (LIQG…AGII) and 195–215 (AVVF…VAYF). Glu220 contacts Zn(2+).

It belongs to the peptidase M48B family. The cofactor is Zn(2+).

It localises to the cell inner membrane. The sequence is that of Protease HtpX from Shewanella sp. (strain MR-4).